A 195-amino-acid chain; its full sequence is Cytochrome c oxidase assembly protein CtaG (195 aa).

At methionine 1–threonine 9 the chain is on the cytoplasmic side. Residues valine 10–phenylalanine 30 form a helical; Signal-anchor for type II membrane protein membrane-spanning segment. The Periplasmic segment spans residues tyrosine 31–asparagine 195.

It belongs to the COX11/CtaG family.

The protein localises to the cell inner membrane. In terms of biological role, exerts its effect at some terminal stage of cytochrome c oxidase synthesis, probably by being involved in the insertion of the copper B into subunit I. The polypeptide is Cytochrome c oxidase assembly protein CtaG (Ruegeria sp. (strain TM1040) (Silicibacter sp.)).